Here is a 514-residue protein sequence, read N- to C-terminus: MQNLPKWKIFLSIICTIFAVICALPNFTQVKSKYLPHDSVNLGLDLRGGAHLLLDVDFDTYLNDTMENLADTLRKSFREDKIGYKNLLVKQNNIQLELRSQEELKPLKRIISKIDPEINVEANDNRIKLSYSESRLSELLNKVVDQSIEIVRMRVDSTGTKEPILQKQGDRHILLQVPGEEDPTYLKNILGKTAKLIFHLVDENANVEEAVKGHVPMGSMLVQGDRMGYLVVKKKAILGGDSLTTAAASFDQNSQAVVSFSFNSLGSKLFGEVTKNNVGKHLAIVLDNKLLSAPTINQPIMGGSGIISGDFTVESANELALLLRAGSLPAPLKIIEERSIGPNLGADSIESGKKAGIIGFAAVCIFMVWSYGLLGLFANIALSLAMLYVLALLSLFQATLTLPGIAGIILTMGMAVDANVLIYERIKEELNKGTSNLYAIKTGFESAFATILDSNLTTLIVAFLLYIFGVGAIKGFAVALTIGIISSMFSAIIITKLLIDIWVKYFKPKKLGLV.

5 helical membrane-spanning segments follow: residues Trp-7 to Phe-27, Ile-357 to Phe-377, Val-389 to Ile-409, Phe-448 to Val-470, and Ile-482 to Trp-502.

Belongs to the SecD/SecF family. SecD subfamily. As to quaternary structure, forms a complex with SecF. Part of the essential Sec protein translocation apparatus which comprises SecA, SecYEG and auxiliary proteins SecDF-YajC and YidC.

It is found in the cell inner membrane. In terms of biological role, part of the Sec protein translocase complex. Interacts with the SecYEG preprotein conducting channel. SecDF uses the proton motive force (PMF) to complete protein translocation after the ATP-dependent function of SecA. In Rickettsia bellii (strain RML369-C), this protein is Protein translocase subunit SecD.